The sequence spans 103 residues: MQPNDITFFQRFQDDILAGRKTITIRDESESHFKTGDVLRVGRFEDDGYFCTIEVTATSTVTLDTLTEKHAEQENMTLTELKKVIADIYPDQTQFYVIEFKCL.

Positions 6–101 (ITFFQRFQDD…QTQFYVIEFK (96 aa)) constitute an ASCH domain. The active-site Proton acceptor is K21. T24 (nucleophile) is an active-site residue. Catalysis depends on E74, which acts as the Proton donor.

Belongs to the N(4)-acetylcytidine amidohydrolase family.

It catalyses the reaction N(4)-acetylcytidine + H2O = cytidine + acetate + H(+). It carries out the reaction N(4)-acetyl-2'-deoxycytidine + H2O = 2'-deoxycytidine + acetate + H(+). The enzyme catalyses N(4)-acetylcytosine + H2O = cytosine + acetate + H(+). Functionally, catalyzes the hydrolysis of N(4)-acetylcytidine (ac4C). This Escherichia coli O81 (strain ED1a) protein is N(4)-acetylcytidine amidohydrolase (yqfB).